Consider the following 475-residue polypeptide: 3-isopropylmalate dehydratase large subunit (475 aa).

Residues Cys-349, Cys-409, and Cys-412 each coordinate [4Fe-4S] cluster.

The protein belongs to the aconitase/IPM isomerase family. LeuC type 1 subfamily. As to quaternary structure, heterodimer of LeuC and LeuD. The cofactor is [4Fe-4S] cluster.

The catalysed reaction is (2R,3S)-3-isopropylmalate = (2S)-2-isopropylmalate. It functions in the pathway amino-acid biosynthesis; L-leucine biosynthesis; L-leucine from 3-methyl-2-oxobutanoate: step 2/4. Catalyzes the isomerization between 2-isopropylmalate and 3-isopropylmalate, via the formation of 2-isopropylmaleate. The polypeptide is 3-isopropylmalate dehydratase large subunit (Cereibacter sphaeroides (strain ATCC 17029 / ATH 2.4.9) (Rhodobacter sphaeroides)).